Reading from the N-terminus, the 414-residue chain is Secernin-1 (414 aa).

The protein belongs to the peptidase C69 family. Secernin subfamily.

Its subcellular location is the cytoplasm. Its function is as follows. Regulates exocytosis in mast cells. Increases both the extent of secretion and the sensitivity of mast cells to stimulation with calcium. The protein is Secernin-1 (Scrn1) of Mus musculus (Mouse).